A 1434-amino-acid chain; its full sequence is Probable deoxyribonuclease RhsA (1434 aa).

The tract at residues 14–42 (AMHAGNRPNPPDDRPQPCRGKPPTSPGKT) is disordered. A run of 2 helical transmembrane segments spans residues 48–68 (FLGA…VAAA) and 70–90 (VFLV…LAVF). YD repeat units follow at residues 486-521 (YDAA…CADG), 592-628 (DDTG…LGRE), and 847-876 (YDAR…LTEV).

It belongs to the RHS/WapA nuclease family.

It localises to the membrane. Its function is as follows. Toxic component of a toxin-immunity protein module, which functions as a cellular contact-dependent growth inhibition (CDI) system. This protein may be a nuclease that is specifically inhibited by its cognate immunity protein RhsAI. Upon expression of the C-terminus (residues 1284-1434) in E.coli growth is inhibited, cells elongate, nucleoids condense and plasmid DNA is degraded; these effects are blocked specifically by cognate immunity protein RshIA. Cell contact is necessary for growth inhibition. The chain is Probable deoxyribonuclease RhsA (rhsA) from Dickeya dadantii (strain 3937) (Erwinia chrysanthemi (strain 3937)).